We begin with the raw amino-acid sequence, 601 residues long: DnaJ-like protein MG200 (601 aa).

In terms of domain architecture, J spans 5–77; sequence KRDYYEVLGI…DKYGFDGVDG (73 aa). Disordered stretches follow at residues 143 to 163 and 205 to 272; these read VQQN…VPGE and VDSE…EPIP. A compositionally biased stretch (basic and acidic residues) spans 151–160; the sequence is KDPDELRSKV. Pro residues predominate over residues 263–272; that stretch reads EPTPIPEPIP.

The sequence is that of DnaJ-like protein MG200 from Mycoplasma genitalium (strain ATCC 33530 / DSM 19775 / NCTC 10195 / G37) (Mycoplasmoides genitalium).